The sequence spans 254 residues: MNNVSMRELLEAGAHFGHRTRFWNPKMSEYIFGSRNKIHIINLEKTLPMLSDVTNYVSRLAANKAKILFVGTKRAAQDSIREHAKRCGMPYVDHRWLGGMLTNYKTVRQSIFRLKELKEMKEKGLFNDMIKKEALMLTRELEKLERSLGGIENMGGLPDALFVVDVGFEHIAVEEARRLRIPVIGVVDTNNSPDNIDYVIPGNDDSMRAVDIYVRCVADAILDGKNSNTVGRVSSDSEFVEVTSNSNEEEKSGE.

The protein belongs to the universal ribosomal protein uS2 family.

This chain is Small ribosomal subunit protein uS2, found in Legionella pneumophila subsp. pneumophila (strain Philadelphia 1 / ATCC 33152 / DSM 7513).